The sequence spans 101 residues: Small ribosomal subunit protein uS14 (101 aa).

The protein belongs to the universal ribosomal protein uS14 family. In terms of assembly, part of the 30S ribosomal subunit. Contacts proteins S3 and S10.

Functionally, binds 16S rRNA, required for the assembly of 30S particles and may also be responsible for determining the conformation of the 16S rRNA at the A site. The sequence is that of Small ribosomal subunit protein uS14 from Pseudomonas putida (strain W619).